A 71-amino-acid chain; its full sequence is R-phycoerythrin gamma-1 chain, chloroplastic (71 aa).

The phycourobilin site is built by Cys-25 and Cys-34. Cys-49 is a binding site for (2R,3E)-phycoerythrobilin. Cys-58 serves as a coordination point for phycourobilin.

As to quaternary structure, heteromer of 6 alpha, 6 beta and 1 gamma chains. In terms of processing, contains four covalently linked bilin chromophores.

The protein localises to the plastid. It is found in the chloroplast thylakoid membrane. Its function is as follows. Critical for the incorporation of phycoerythrin in the phycobilisome complex. This Gastroclonium coulteri (Red alga) protein is R-phycoerythrin gamma-1 chain, chloroplastic.